The chain runs to 311 residues: Purine nucleoside phosphorylase (311 aa).

At S2 the chain carries N-acetylserine. Phosphate is bound by residues S46, H81, 101-103, and A134; that span reads RLH. Residue E219 participates in a purine D-ribonucleoside binding. S238 lines the phosphate pocket. A purine D-ribonucleoside is bound at residue N261. S275 carries the post-translational modification Phosphoserine.

The protein belongs to the PNP/MTAP phosphorylase family.

The enzyme catalyses a purine D-ribonucleoside + phosphate = a purine nucleobase + alpha-D-ribose 1-phosphate. Its pathway is purine metabolism; purine nucleoside salvage. The purine nucleoside phosphorylases catalyze the phosphorolytic breakdown of the N-glycosidic bond in the beta-(deoxy)ribonucleoside molecules, with the formation of the corresponding free purine bases and pentose-1-phosphate. Cleaves guanosine and inosine. This chain is Purine nucleoside phosphorylase (PNP1), found in Saccharomyces cerevisiae (strain ATCC 204508 / S288c) (Baker's yeast).